Consider the following 433-residue polypeptide: 3-phosphoshikimate 1-carboxyvinyltransferase (433 aa).

3-phosphoshikimate-binding residues include K21, S22, and R26. K21 lines the phosphoenolpyruvate pocket. Phosphoenolpyruvate contacts are provided by G96 and R124. Residues S167, S168, Q169, S195, D310, and K337 each contribute to the 3-phosphoshikimate site. A phosphoenolpyruvate-binding site is contributed by Q169. The Proton acceptor role is filled by D310. Residues R341, R384, and K410 each contribute to the phosphoenolpyruvate site.

It belongs to the EPSP synthase family. Monomer.

It is found in the cytoplasm. It carries out the reaction 3-phosphoshikimate + phosphoenolpyruvate = 5-O-(1-carboxyvinyl)-3-phosphoshikimate + phosphate. It participates in metabolic intermediate biosynthesis; chorismate biosynthesis; chorismate from D-erythrose 4-phosphate and phosphoenolpyruvate: step 6/7. Its function is as follows. Catalyzes the transfer of the enolpyruvyl moiety of phosphoenolpyruvate (PEP) to the 5-hydroxyl of shikimate-3-phosphate (S3P) to produce enolpyruvyl shikimate-3-phosphate and inorganic phosphate. This Clostridium botulinum (strain Alaska E43 / Type E3) protein is 3-phosphoshikimate 1-carboxyvinyltransferase.